Reading from the N-terminus, the 201-residue chain is uncharacterized protein (201 aa).

Coiled coils occupy residues Y3 to K43 and T76 to K120.

This is an uncharacterized protein from Archaeoglobus fulgidus (strain ATCC 49558 / DSM 4304 / JCM 9628 / NBRC 100126 / VC-16).